Reading from the N-terminus, the 246-residue chain is Trypsin-5 (246 aa).

A signal peptide spans 1–15 (MNSLLFLALVGAAVA). Positions 16-23 (FPVDDDDK) are cleaved as a propeptide — activation peptide. The region spanning 24-244 (IVGGYTCREN…YVDWIQDTIA (221 aa)) is the Peptidase S1 domain. The cysteines at positions 48 and 64 are disulfide-linked. Residues His63 and Asp107 each act as charge relay system in the active site. 3 disulfides stabilise this stretch: Cys139–Cys206, Cys171–Cys185, and Cys196–Cys220. Ser200 serves as the catalytic Charge relay system.

The protein belongs to the peptidase S1 family. In terms of processing, proteolytically cleaved and activated by an autocatalytic mechanism. Cleavage by CTRC inhibits autoactivation. Expressed in the heart, lung, brain, kidney, liver, epididymis, ovary and uterus. Expression in the testis is limited to round and elongating spermatids.

Its subcellular location is the cytoplasmic vesicle. The protein localises to the secretory vesicle. It is found in the acrosome. It carries out the reaction Preferential cleavage: Arg-|-Xaa, Lys-|-Xaa.. Activated by autocatalytic cleavage. Cleavage by CTRC inhibits autoactivation. Serine protease capable of autoactivation. This chain is Trypsin-5, found in Mus musculus (Mouse).